The chain runs to 68 residues: MPNLAAAVPCRPFVNLAQETGTTNLLVAGSRPTNTGVRNFVINLTVSESSSSRRTANRILLRSFTSLL.

This is an uncharacterized protein from Homo sapiens (Human).